Here is a 411-residue protein sequence, read N- to C-terminus: Arginine deiminase (411 aa).

C401 acts as the Amidino-cysteine intermediate in catalysis.

The protein belongs to the arginine deiminase family.

It is found in the cytoplasm. It carries out the reaction L-arginine + H2O = L-citrulline + NH4(+). It participates in amino-acid degradation; L-arginine degradation via ADI pathway; carbamoyl phosphate from L-arginine: step 1/2. The protein is Arginine deiminase of Streptococcus equi subsp. zooepidemicus (strain H70).